A 67-amino-acid chain; its full sequence is Major cold shock protein (67 aa).

Residues 4-63 (GTVKWFNAEKGFGFISTENGQDVFAHFSAIQTSGFKTLEEGQKVAFDVEEGQRGPQAVNI) enclose the CSD domain.

As to quaternary structure, homodimer.

Its subcellular location is the cytoplasm. The polypeptide is Major cold shock protein (cspA) (Streptococcus pyogenes serotype M6 (strain ATCC BAA-946 / MGAS10394)).